We begin with the raw amino-acid sequence, 357 residues long: DNA replication and repair protein RecF (357 aa).

ATP is bound at residue 30–37 (GANGSGKT).

This sequence belongs to the RecF family.

It localises to the cytoplasm. Its function is as follows. The RecF protein is involved in DNA metabolism; it is required for DNA replication and normal SOS inducibility. RecF binds preferentially to single-stranded, linear DNA. It also seems to bind ATP. This is DNA replication and repair protein RecF from Salmonella paratyphi B (strain ATCC BAA-1250 / SPB7).